The following is a 345-amino-acid chain: Putative pyridoxal reductase (345 aa).

Tyrosine 60 serves as the catalytic Proton donor.

This sequence belongs to the aldo/keto reductase family.

The protein localises to the cytoplasm. It localises to the nucleus. It carries out the reaction pyridoxine + NADP(+) = pyridoxal + NADPH + H(+). It functions in the pathway cofactor degradation; B6 vitamer degradation; pyridoxal from pyridoxine (dehydrogenase route): step 1/1. In terms of biological role, catalyzes the reduction of pyridoxal (PL) with NADPH and oxidation of pyridoxine (PN) with NADP(+). The polypeptide is Putative pyridoxal reductase (Saccharomyces cerevisiae (strain ATCC 204508 / S288c) (Baker's yeast)).